Reading from the N-terminus, the 292-residue chain is Elongation factor Ts (292 aa).

Residues T80–V83 form an involved in Mg(2+) ion dislocation from EF-Tu region.

This sequence belongs to the EF-Ts family.

The protein resides in the cytoplasm. In terms of biological role, associates with the EF-Tu.GDP complex and induces the exchange of GDP to GTP. It remains bound to the aminoacyl-tRNA.EF-Tu.GTP complex up to the GTP hydrolysis stage on the ribosome. In Cupriavidus metallidurans (strain ATCC 43123 / DSM 2839 / NBRC 102507 / CH34) (Ralstonia metallidurans), this protein is Elongation factor Ts.